Reading from the N-terminus, the 364-residue chain is MKKREDTRVVVGMSGGVDSSVTALLLKEQGYDVIGIFMKNWDDSNDSGFCSATEDYEDVERVAQQLGIPYYAVNFEKQYWDKVFTYFLEEYKAGRTPNPDVMCNKEIKFKAFLNHAISLGADYVATGHYAQLQELDGEYRLIKGADANKDQTYFLNALSQKQLSKVMFPLGHLQKAEVRKIAAEAELATATKKDSTGICFIGERDFKEFLQTFLPAQPGRMETMDGIDKGQHDGLMYYTLGQRQGLGIGGAGEPWFVIDKDLERNVLIVGQGYHHPGLYSDGLWATDMNWIAKEERTSPFTCKAKFRYRQEDQGVTVFPKEDGRAFIQFDQPQRAITPGQAVVLYEGDRCIGGGVIDKIHRENA.

ATP-binding positions include 12 to 19 (GMSGGVDS) and M38. Residues 98–100 (NPD) are interaction with target base in tRNA. C103 functions as the Nucleophile in the catalytic mechanism. Cysteines 103 and 199 form a disulfide. G127 contacts ATP. The interaction with tRNA stretch occupies residues 149 to 151 (KDQ). C199 serves as the catalytic Cysteine persulfide intermediate. The interaction with tRNA stretch occupies residues 307-308 (RY).

This sequence belongs to the MnmA/TRMU family.

The protein localises to the cytoplasm. The catalysed reaction is S-sulfanyl-L-cysteinyl-[protein] + uridine(34) in tRNA + AH2 + ATP = 2-thiouridine(34) in tRNA + L-cysteinyl-[protein] + A + AMP + diphosphate + H(+). Its function is as follows. Catalyzes the 2-thiolation of uridine at the wobble position (U34) of tRNA, leading to the formation of s(2)U34. The chain is tRNA-specific 2-thiouridylase MnmA from Shouchella clausii (strain KSM-K16) (Alkalihalobacillus clausii).